Consider the following 141-residue polypeptide: uncharacterized protein (141 aa).

Its subcellular location is the cytoplasm. This is an uncharacterized protein from Homo sapiens (Human).